Consider the following 273-residue polypeptide: 1,4-dihydroxy-2-naphthoyl-CoA synthase (273 aa).

Substrate contacts are provided by residues arginine 34, 73–77 (SGGDQ), tyrosine 85, 117–121 (YAVGG), threonine 143, serine 149, tyrosine 246, and lysine 261. Residue 142 to 144 (QTG) coordinates hydrogencarbonate. The span at 254–265 (GRDAFKEKRDPD) shows a compositional bias: basic and acidic residues. The segment at 254 to 273 (GRDAFKEKRDPDFDQFPKFP) is disordered.

It belongs to the enoyl-CoA hydratase/isomerase family. MenB subfamily. Requires hydrogencarbonate as cofactor.

It catalyses the reaction 2-succinylbenzoyl-CoA + H(+) = 1,4-dihydroxy-2-naphthoyl-CoA + H2O. Its pathway is quinol/quinone metabolism; 1,4-dihydroxy-2-naphthoate biosynthesis; 1,4-dihydroxy-2-naphthoate from chorismate: step 6/7. It participates in quinol/quinone metabolism; menaquinone biosynthesis. Its function is as follows. Converts o-succinylbenzoyl-CoA (OSB-CoA) to 1,4-dihydroxy-2-naphthoyl-CoA (DHNA-CoA). The polypeptide is 1,4-dihydroxy-2-naphthoyl-CoA synthase (Staphylococcus aureus (strain MSSA476)).